We begin with the raw amino-acid sequence, 393 residues long: Formate-dependent phosphoribosylglycinamide formyltransferase (393 aa).

N(1)-(5-phospho-beta-D-ribosyl)glycinamide contacts are provided by residues 22-23 and Glu82; that span reads EL. Residues Arg114, Lys155, 160 to 165, 195 to 198, and Glu203 contribute to the ATP site; these read SSGKGQ and EGLV. In terms of domain architecture, ATP-grasp spans 119-308; sequence RLAAETLQLP…EFALHVRAFL (190 aa). Residues Glu267 and Glu279 each contribute to the Mg(2+) site. Residues Asp286, Lys355, and 362-363 each bind N(1)-(5-phospho-beta-D-ribosyl)glycinamide; that span reads RR.

The protein belongs to the PurK/PurT family. Homodimer.

The catalysed reaction is N(1)-(5-phospho-beta-D-ribosyl)glycinamide + formate + ATP = N(2)-formyl-N(1)-(5-phospho-beta-D-ribosyl)glycinamide + ADP + phosphate + H(+). Its pathway is purine metabolism; IMP biosynthesis via de novo pathway; N(2)-formyl-N(1)-(5-phospho-D-ribosyl)glycinamide from N(1)-(5-phospho-D-ribosyl)glycinamide (formate route): step 1/1. In terms of biological role, involved in the de novo purine biosynthesis. Catalyzes the transfer of formate to 5-phospho-ribosyl-glycinamide (GAR), producing 5-phospho-ribosyl-N-formylglycinamide (FGAR). Formate is provided by PurU via hydrolysis of 10-formyl-tetrahydrofolate. The protein is Formate-dependent phosphoribosylglycinamide formyltransferase of Yersinia pseudotuberculosis serotype O:3 (strain YPIII).